The chain runs to 92 residues: Small ribosomal subunit protein bS18 (92 aa).

Belongs to the bacterial ribosomal protein bS18 family. As to quaternary structure, part of the 30S ribosomal subunit. Forms a tight heterodimer with protein bS6.

In terms of biological role, binds as a heterodimer with protein bS6 to the central domain of the 16S rRNA, where it helps stabilize the platform of the 30S subunit. This Cupriavidus taiwanensis (strain DSM 17343 / BCRC 17206 / CCUG 44338 / CIP 107171 / LMG 19424 / R1) (Ralstonia taiwanensis (strain LMG 19424)) protein is Small ribosomal subunit protein bS18.